The sequence spans 130 residues: Ion transport peptide (130 aa).

3 disulfides stabilise this stretch: Cys62–Cys98, Cys78–Cys94, and Cys81–Cys107. The residue at position 127 (Leu127) is a Leucine amide.

Belongs to the arthropod CHH/MIH/GIH/VIH hormone family. Brain and corpus cardiacum.

The protein localises to the secreted. In terms of biological role, stimulates salt and water reabsorption and inhibits acid secretion in the ileum of S.gregaria. In Schistocerca gregaria (Desert locust), this protein is Ion transport peptide.